Reading from the N-terminus, the 348-residue chain is MSGLSHLESEGCRNLLGMLDNDEIMALCDTVTNRLVQPVDRQDAIRAILVYSQNVEELLRRKKVHREVIFKYLATQGVVVPPTTEKHGLIQYAKSYWEEQSPKLKETAEPVKKTEDIQLFEQQAKEDKEAEKVDFRRLGEEFCHWFFELLNSQNPFLGPPQDEWGPQHFWHDVKLRFYYNTSEQNMTDYEGAEMVSLRLLSLVKEEFLFLSPNLDSQGLKCASSPHGLVMVGVAGTVHRGNSCLGIFEQIFGLIRSPFVENTWKIKFINLRIVGGSSLAPGSSLKPSVTFEQSDFEAFYNVITLCNTPEVRPNVRQILDSGTGDQVLCSGDEALLNKKEMNLPTPLKH.

Its function is as follows. May be involved in apoptosis regulation. This is an uncharacterized protein from Rattus norvegicus (Rat).